The primary structure comprises 404 residues: Mevalonate kinase (404 aa).

ATP is bound by residues Lys12, Ser130, and 135–141 (GAGLGSS). Residues Ser141 and Glu184 each contribute to the Mg(2+) site. The active-site Proton acceptor is the Asp195.

It belongs to the GHMP kinase family. Mevalonate kinase subfamily. As to quaternary structure, homodimer. Mg(2+) serves as cofactor.

The protein resides in the cytoplasm. It localises to the nucleus. The enzyme catalyses (R)-mevalonate + ATP = (R)-5-phosphomevalonate + ADP + H(+). It participates in isoprenoid biosynthesis; isopentenyl diphosphate biosynthesis via mevalonate pathway; isopentenyl diphosphate from (R)-mevalonate: step 1/3. Its activity is regulated as follows. Farnesyl pyrophosphate and geranyl pyrophosphate inhibit mevalonate kinase by binding competitively at the ATP-binding site. Functionally, mevalonate kinase; part of the second module of ergosterol biosynthesis pathway that includes the middle steps of the pathway. Erg12 converts mevalonate into 5-phosphomevalonate. The second module is carried out in the vacuole and involves the formation of farnesyl diphosphate, which is also an important intermediate in the biosynthesis of ubiquinone, dolichol, heme and prenylated proteins. Activity by the mevalonate kinase erg12 first converts mevalonate into 5-phosphomevalonate. 5-phosphomevalonate is then further converted to 5-diphosphomevalonate by the phosphomevalonate kinase erg8. The diphosphomevalonate decarboxylase mvd1 then produces isopentenyl diphosphate. The isopentenyl-diphosphate delta-isomerase idi1 then catalyzes the 1,3-allylic rearrangement of the homoallylic substrate isopentenyl (IPP) to its highly electrophilic allylic isomer, dimethylallyl diphosphate (DMAPP). Finally the farnesyl diphosphate synthase fps1 catalyzes the sequential condensation of isopentenyl pyrophosphate with dimethylallyl pyrophosphate, and then with the resultant geranylpyrophosphate to the ultimate product farnesyl pyrophosphate. The protein is Mevalonate kinase (erg12) of Schizosaccharomyces pombe (strain 972 / ATCC 24843) (Fission yeast).